Here is a 277-residue protein sequence, read N- to C-terminus: Large ribosomal subunit protein uL2 (277 aa).

Positions glycine 222 to lysine 277 are disordered.

Belongs to the universal ribosomal protein uL2 family. Part of the 50S ribosomal subunit. Forms a bridge to the 30S subunit in the 70S ribosome.

Functionally, one of the primary rRNA binding proteins. Required for association of the 30S and 50S subunits to form the 70S ribosome, for tRNA binding and peptide bond formation. It has been suggested to have peptidyltransferase activity; this is somewhat controversial. Makes several contacts with the 16S rRNA in the 70S ribosome. The polypeptide is Large ribosomal subunit protein uL2 (Bradyrhizobium sp. (strain ORS 278)).